Here is a 330-residue protein sequence, read N- to C-terminus: Putative quinone oxidoreductase YhfP (330 aa).

NADP(+)-binding positions include Tyr45, 160-163 (TGGV), 182-184 (TGN), Arg202, Leu248, Ile262, Ser273, and Asn320.

The protein belongs to the zinc-containing alcohol dehydrogenase family. Quinone oxidoreductase subfamily. As to quaternary structure, homodimer, or homotetramer.

The protein localises to the cytoplasm. This Bacillus subtilis (strain 168) protein is Putative quinone oxidoreductase YhfP (yhfP).